A 234-amino-acid polypeptide reads, in one-letter code: MAKLTKRMRVIREKVDATKQYDINEAVALLQELATAKFVESVDVAVNLGIDARKSDQNVRGATVLPHGTGRTVRVAVFTQGPNAEAAKAAGADLVGMEDLADQIKKGEMNFDVVIASPDAMRVVGQLGQILGPRGLMPNPKVGTVTPNVAEAVKNAKAGQVRYRNDKNGIIHSTIGKASFSAEQLKENLEALMVALKKAKPATAKGVYIKKVCLSTTMGAGVTIDQATLSAVAN.

The protein belongs to the universal ribosomal protein uL1 family. Part of the 50S ribosomal subunit.

In terms of biological role, binds directly to 23S rRNA. The L1 stalk is quite mobile in the ribosome, and is involved in E site tRNA release. Functionally, protein L1 is also a translational repressor protein, it controls the translation of the L11 operon by binding to its mRNA. The sequence is that of Large ribosomal subunit protein uL1 from Edwardsiella ictaluri (strain 93-146).